A 1016-amino-acid polypeptide reads, in one-letter code: MDTSGFLDLDINSGTTTPNIRNSVTTSNDIMSSIFDTIPTKEKKVDAAVESIFGTEAANSPLISSSIPPIPIEASTSTQQQQQQQQQQEEIIPSQPISVTKENTVTTTTTTTATTAVPTTTTTPTSTLINSEPIVVNPLEVNINTKVDDSDSDQDEQIKKENVVHEIFTPIVSIINNNNNNNNNEIDNNNNGNSNENTTTTTTNKDMNNSFSMGVTTASKDEHIISTTTVGTIEQEIHEKQEEPLISPLQSEFNKIFFSTIPLEKKPLEILKMNAFTGALKYSPLRGIAWKLFLGGLDINRVDKWERDITQQRKRYEKLKEEHCFDPRNSNSTYDPLSQNDDSPWNKFFKNLDTQKIIKIDLERTHPDNDFFSNPVIREMMATILFVYSKTNGIISYRQGMHELLAPIIYLYNQEYSSYKKLDENSSSTLVDFIYNIKYLEHDTFAIFERLMKFTSDWYAPAPTQQTNNSNNSNNTNNNNTTTSPSSSSSSSSSSTTTAAATTVSSSTSTSSSSSTITSSSSSTVSPPPPSSSSSPSPPPPPPLGSNSPTVASSSSSSVQDNEEEELSSKCNDVVLKCKYIHSILLKQKDFELYQHLDSLDIEPQIYLLRWIRLLFGREFHFDDVLNIWDALFAYGENLILIDYFCISMLTYIREHLLKSDSIYALKRIYKYPPVEDVYMLIKKALEIKDSNCSIAGMVKTAQPPTTLSSSGSRQIPNNNNNNNNNNNNNNNNNNNNNNSNNNINNNNNNSNNNITTPSTQANTLPFPETSTFESTTSSFQPYSSQLSSANTTPIDPLSNKTTPLISSTSNVSNTPNITSTSTLLSSSSSSSSSTTTPLQSHTPILTHNNNNSHFSPSPSSSSSSLNNSSHVSIPVKSNVKDIFANSKESDLFSLFSTATTPINNNTSSLSISNPTISIGQARTLNKHKSMTLPSSPLISQDSEALKQLKNTQIEFGNQLKEVLPFLEKGKNFLLGNEDELSKSEIDDFIKALEKVKQIQEILSNNNINNNNENKL.

Disordered stretches follow at residues 1–23, 60–109, 179–209, 463–566, and 704–872; these read MDTS…IRNS, SPLI…TTTT, NNNN…DMNN, PTQQ…EEEE, and PPTT…SSHV. Residues 12–23 are compositionally biased toward polar residues; that stretch reads NSGTTTPNIRNS. The segment covering 79–88 has biased composition (low complexity); the sequence is QQQQQQQQQQ. The 357-residue stretch at 280-636 folds into the Rab-GAP TBC domain; that stretch reads LKYSPLRGIA…NIWDALFAYG (357 aa). Residues 467 to 525 are compositionally biased toward low complexity; sequence TNNSNNSNNTNNNNTTTSPSSSSSSSSSSTTTAAATTVSSSTSTSSSSSTITSSSSSTV. A compositionally biased stretch (pro residues) spans 526 to 544; that stretch reads SPPPPSSSSSPSPPPPPPL. Low complexity predominate over residues 545 to 558; the sequence is GSNSPTVASSSSSS. Over residues 704–717 the composition is skewed to polar residues; the sequence is PPTTLSSSGSRQIP. Composition is skewed to low complexity over residues 718-755 and 766-789; these read NNNN…NNNI and PFPE…QLSS. Over residues 790 to 806 the composition is skewed to polar residues; the sequence is ANTTPIDPLSNKTTPLI. Residues 807-872 are compositionally biased toward low complexity; it reads SSTSNVSNTP…SSSLNNSSHV (66 aa).

Functionally, may act as a GTPase-activating protein for Rab family protein(s). The chain is TBC1 domain family member 5 homolog B (tbc1d5B) from Dictyostelium discoideum (Social amoeba).